The sequence spans 906 residues: Protein translocase subunit SecA (906 aa).

ATP contacts are provided by residues glutamine 87, 105 to 109 (GEGKT), and aspartate 512. Residues 875–897 (VTFVRDEQKVGRNDPCPCGSGKK) are disordered. Positions 890, 892, 901, and 902 each coordinate Zn(2+).

This sequence belongs to the SecA family. As to quaternary structure, monomer and homodimer. Part of the essential Sec protein translocation apparatus which comprises SecA, SecYEG and auxiliary proteins SecDF-YajC and YidC. Requires Zn(2+) as cofactor.

The protein resides in the cell inner membrane. It is found in the cytoplasm. The catalysed reaction is ATP + H2O + cellular proteinSide 1 = ADP + phosphate + cellular proteinSide 2.. Its function is as follows. Part of the Sec protein translocase complex. Interacts with the SecYEG preprotein conducting channel. Has a central role in coupling the hydrolysis of ATP to the transfer of proteins into and across the cell membrane, serving both as a receptor for the preprotein-SecB complex and as an ATP-driven molecular motor driving the stepwise translocation of polypeptide chains across the membrane. In Aeromonas hydrophila subsp. hydrophila (strain ATCC 7966 / DSM 30187 / BCRC 13018 / CCUG 14551 / JCM 1027 / KCTC 2358 / NCIMB 9240 / NCTC 8049), this protein is Protein translocase subunit SecA.